The sequence spans 393 residues: Beta-1,4-galactosyltransferase 3 (393 aa).

The Cytoplasmic portion of the chain corresponds to 1–10; sequence MLRRLLERPC. The helical; Signal-anchor for type II membrane protein transmembrane segment at 11-31 threads the bilayer; sequence TLALLVGSQLAVMMYLSLGGF. The Lumenal segment spans residues 32-393; sequence RSLSALFGRD…ANHTALRGSH (362 aa). N57 carries N-linked (GlcNAc...) asparagine glycosylation. C77 and C119 form a disulfide bridge. 130–134 lines the UDP-alpha-D-galactose pocket; the sequence is PHRAR. A glycan (N-linked (GlcNAc...) asparagine) is linked at N166. UDP-alpha-D-galactose contacts are provided by residues 169 to 171, 196 to 197, Y226, and W258; these read FNR and VD. C190 and C209 are oxidised to a cystine. D197 contacts Mn(2+). 260-263 lines the N-acetyl-D-glucosamine pocket; the sequence is GEDD. H291 is a binding site for Mn(2+). 291–293 serves as a coordination point for UDP-alpha-D-galactose; it reads HRG. R303 is a binding site for N-acetyl-D-glucosamine. N-linked (GlcNAc...) asparagine glycans are attached at residues N337 and N385. The interval 339-393 is disordered; it reads TADIGTDPRGPRAPSGPRYPPGSSQAFRQEMLQRRPPARPGPPPTANHTALRGSH.

It belongs to the glycosyltransferase 7 family. It depends on Mn(2+) as a cofactor.

Its subcellular location is the golgi apparatus. The protein resides in the golgi stack membrane. It carries out the reaction an N-acetyl-beta-D-glucosaminyl derivative + UDP-alpha-D-galactose = a beta-D-galactosyl-(1-&gt;4)-N-acetyl-beta-D-glucosaminyl derivative + UDP + H(+). The enzyme catalyses N-acetyl-D-glucosamine + UDP-alpha-D-galactose = beta-D-galactosyl-(1-&gt;4)-N-acetyl-D-glucosamine + UDP + H(+). The catalysed reaction is a beta-D-GlcNAc-(1-&gt;3)-beta-D-Gal-(1-&gt;4)-beta-D-Glc-(1&lt;-&gt;1)-Cer(d18:1(4E)) + UDP-alpha-D-galactose = a neolactoside nLc4Cer(d18:1(4E)) + UDP + H(+). It catalyses the reaction a beta-D-glucosylceramide + UDP-alpha-D-galactose = a beta-D-galactosyl-(1-&gt;4)-beta-D-glucosyl-(1&lt;-&gt;1)-ceramide + UDP + H(+). It carries out the reaction a neolactoside IV(3)-beta-GlcNAc-nLc4Cer + UDP-alpha-D-galactose = a neolactoside nLc6Cer + UDP + H(+). The protein operates within protein modification; protein glycosylation. Its function is as follows. Responsible for the synthesis of complex-type N-linked oligosaccharides in many glycoproteins as well as the carbohydrate moieties of glycolipids. In Pongo abelii (Sumatran orangutan), this protein is Beta-1,4-galactosyltransferase 3 (B4GALT3).